The sequence spans 36 residues: GADEDCLPRGSKCLGENKQCCEKTTCMFYANRCVGI.

3 disulfide bridges follow: Cys-6–Cys-21, Cys-13–Cys-26, and Cys-20–Cys-33.

It is found in the secreted. Functionally, binds reversibly and blocks N-type voltage-gated calcium channels (Cav). The sequence is that of Toxin Iob1 from Isyndus obscurus (Assassin bug).